Consider the following 304-residue polypeptide: tRNA pseudouridine synthase B (304 aa).

Asp-38 functions as the Nucleophile in the catalytic mechanism. The PUA domain maps to 227–302; the sequence is LPKVEIYKDF…RIFKLKKVFK (76 aa).

It belongs to the pseudouridine synthase TruB family. Type 1 subfamily.

It carries out the reaction uridine(55) in tRNA = pseudouridine(55) in tRNA. Responsible for synthesis of pseudouridine from uracil-55 in the psi GC loop of transfer RNAs. The chain is tRNA pseudouridine synthase B from Thermosipho melanesiensis (strain DSM 12029 / CIP 104789 / BI429).